Reading from the N-terminus, the 331-residue chain is Phenylalanine--tRNA ligase alpha subunit (331 aa).

Mg(2+) is bound at residue E252.

It belongs to the class-II aminoacyl-tRNA synthetase family. Phe-tRNA synthetase alpha subunit type 1 subfamily. Tetramer of two alpha and two beta subunits. Requires Mg(2+) as cofactor.

The protein resides in the cytoplasm. The enzyme catalyses tRNA(Phe) + L-phenylalanine + ATP = L-phenylalanyl-tRNA(Phe) + AMP + diphosphate + H(+). This chain is Phenylalanine--tRNA ligase alpha subunit, found in Xanthomonas euvesicatoria pv. vesicatoria (strain 85-10) (Xanthomonas campestris pv. vesicatoria).